The primary structure comprises 402 residues: Bisdemethoxycurcumin synthase (402 aa).

Cysteine 174 functions as the Acyl-thioester intermediate in the catalytic mechanism.

It belongs to the thiolase-like superfamily. Chalcone/stilbene synthases family. Homodimer.

The catalysed reaction is 2 4-coumaroyl-CoA + malonyl-CoA + H2O + H(+) = bisdemethoxycurcumin + 2 CO2 + 3 CoA. The protein operates within secondary metabolite biosynthesis; flavonoid biosynthesis. Plant-specific type III polyketide synthase (PKS) that catalyzes the one-pot formation of the C6-C7-C6 diarylheptanoid scaffold of bisdemethoxycurcumin by the condensation of two molecules of 4-coumaroyl-CoA and one molecule of malonyl-CoA. This Oryza sativa subsp. japonica (Rice) protein is Bisdemethoxycurcumin synthase.